We begin with the raw amino-acid sequence, 463 residues long: MSNLGKVIQIIGPIIDIKFDSENLPDLFNALEINAGDRKVIAEVEQHIGDDTIRAIAMEDTEGLKRGMEALDTGKSVSVPVGKEVLGRLFNVLGKPIDGAGEFISEESYPIHRPAPSFEEQSVEPEIFETGIKVIDLLAPYQKGGKIGLFGGAGVGKTVLIQELINNIAKEHGGLSVFTGVGERTREGNDLYYEMKESGVLEKTALVFGQMNEPPGARMRVALTGLTMSEYFRDQGQDVLLFIDNIFRFTQAGSEVSALLGRIPSAVGYQPTLATEMGALQERITSTKNGSITSVQAVYVPADDLTDPAPATTFAHLDATTVLSRSITELGIYPAVDPLESSSRMLDPRIIGEEHYEVAIKVKNILERYRELQDIIAILGIDELSEEDKLVVGRARKIQRFLSQPFTVAEQFTGMQGKYVPIKETVRGFKEILEGKHDNIPESAFLFQGTIEDVLKKAQQMEI.

ATP is bound at residue 151 to 158 (GGAGVGKT).

This sequence belongs to the ATPase alpha/beta chains family. In terms of assembly, F-type ATPases have 2 components, CF(1) - the catalytic core - and CF(0) - the membrane proton channel. CF(1) has five subunits: alpha(3), beta(3), gamma(1), delta(1), epsilon(1). CF(0) has three main subunits: a(1), b(2) and c(9-12). The alpha and beta chains form an alternating ring which encloses part of the gamma chain. CF(1) is attached to CF(0) by a central stalk formed by the gamma and epsilon chains, while a peripheral stalk is formed by the delta and b chains.

It is found in the cell membrane. The enzyme catalyses ATP + H2O + 4 H(+)(in) = ADP + phosphate + 5 H(+)(out). Its function is as follows. Produces ATP from ADP in the presence of a proton gradient across the membrane. The catalytic sites are hosted primarily by the beta subunits. This chain is ATP synthase subunit beta, found in Clostridium botulinum (strain ATCC 19397 / Type A).